A 300-amino-acid chain; its full sequence is Porphobilinogen deaminase (300 aa).

S-(dipyrrolylmethanemethyl)cysteine is present on cysteine 239.

It belongs to the HMBS family. Monomer. It depends on dipyrromethane as a cofactor.

It carries out the reaction 4 porphobilinogen + H2O = hydroxymethylbilane + 4 NH4(+). It functions in the pathway porphyrin-containing compound metabolism; protoporphyrin-IX biosynthesis; coproporphyrinogen-III from 5-aminolevulinate: step 2/4. Tetrapolymerization of the monopyrrole PBG into the hydroxymethylbilane pre-uroporphyrinogen in several discrete steps. In Francisella tularensis subsp. tularensis (strain WY96-3418), this protein is Porphobilinogen deaminase.